The primary structure comprises 327 residues: Complex I intermediate-associated protein 30, mitochondrial (327 aa).

The N-terminal 24 residues, methionine 1–leucine 24, are a transit peptide targeting the mitochondrion. Residues proline 42–histidine 63 are disordered. The span at arginine 53–histidine 63 shows a compositional bias: basic and acidic residues. Serine 318 is subject to Phosphoserine.

This sequence belongs to the CIA30 family. In terms of assembly, part of the mitochondrial complex I assembly/MCIA complex that comprises at least the core subunits TMEM126B, NDUFAF1, ECSIT and ACAD9 and complement subunits such as COA1 and TMEM186. Interacts with ECSIT. Interacts with ACAD9. At early stages of complex I assembly, it is found in intermediate subcomplexes that contain different subunits including NDUFB6, NDUFA6, NDUFA9, NDUFS3, NDUFS7, ND1, ND2 and ND3. Interacts with TMEM70 and TMEM242.

It is found in the mitochondrion. Its subcellular location is the mitochondrion matrix. Its function is as follows. As part of the MCIA complex, involved in the assembly of the mitochondrial complex I. The chain is Complex I intermediate-associated protein 30, mitochondrial from Gorilla gorilla gorilla (Western lowland gorilla).